The chain runs to 124 residues: 14 kDa peptide of ubiquinol-cytochrome c2 oxidoreductase complex (124 aa).

A helical transmembrane segment spans residues 85-102 (LGGFASGALLALALAGIF).

The protein localises to the cell inner membrane. Functionally, component of the ubiquinol-cytochrome c reductase complex (complex III or cytochrome b-c1 complex), which is a respiratory chain that generates an electrochemical potential coupled to ATP synthesis. This Cereibacter sphaeroides (Rhodobacter sphaeroides) protein is 14 kDa peptide of ubiquinol-cytochrome c2 oxidoreductase complex.